We begin with the raw amino-acid sequence, 680 residues long: WD repeat-containing protein 48 homolog (680 aa).

8 WD repeats span residues 26-65 (QHRN…SEKY), 71-110 (HHND…CMST), 113-152 (THRD…ALTA), 164-203 (GSKD…RSMK), 206-245 (GHTE…CVQT), 248-287 (VHKE…NKTL), 290-329 (EEQA…RCTM), and 350-389 (KGGA…KKEQ). The tract at residues 592–616 (ETTPSGGNANNSLQNSQSDANSEGS) is disordered.

It belongs to the WD repeat WDR48 family. As to quaternary structure, catalytic component of the Usp12-46 deubiquitylase complex consisting of Usp12-46, Wdr20 and Uaf1; regulatory subunit that, together wtih Wdr20, stabilizes Usp12-46. The Usp12-46 deubiquitylase complex associates with arr/arrow; the interaction leads to deubiquitination and stabilization of arr/arrow.

In terms of biological role, regulatory component of the Usp12-46 deubiquitylase complex. activates deubiquitination by increasing the catalytic turnover without increasing the affinity of deubiquitinating enzymes for the substrate. The complex deubiquitylates the wg/wingless-signaling receptor arr/arrow, which stabilizes the receptor and increases its concentration at the cell surface; this enhances the sensitivity of cells to wg/wingless-signal stimulation. This increases the amplitude and spatial range of the signaling response to the wg/wingless morphogen gradient, facilitating the precise concentration-dependent regulation of its target genes. Together with Wdr20 and Usp12-46 required for wg/wingless-mediated signaling in the wing imaginal disc and for wg/wingless-dependent regulation of intestinal stem cell proliferation. The sequence is that of WD repeat-containing protein 48 homolog from Drosophila erecta (Fruit fly).